Here is a 218-residue protein sequence, read N- to C-terminus: MGILFSHCSGGREKEDKISKTDRAVLNLKIQRDKLKNYQTQVLEIAIAKECSKAGKKNQALLALKKKKYQEKMLDESFANLQNIEELIANVEQAEIQVRIFESLKQGNESLKEIQKEMSLEDVENLMEETAEAIQYQNDISEALSGKFSKEEEDDLLNELDEMEKQLNAQQYPKVPETQLPKIELPIEDAIEEGKQRKSTTNGLNHILIIACIINHIF.

Coiled coils occupy residues 15–42 and 70–172; these read EDKISKTDRAVLNLKIQRDKLKNYQTQV and QEKM…AQQY.

This sequence belongs to the SNF7 family. As to quaternary structure, probable core component of the endosomal sorting required for transport complex III (ESCRT-III).

It is found in the endosome membrane. Its function is as follows. Probable core component of the endosomal sorting required for transport complex III (ESCRT-III) which is involved in multivesicular bodies (MVBs) formation and sorting of endosomal cargo proteins into MVBs. MVBs contain intraluminal vesicles (ILVs) that are generated by invagination and scission from the limiting membrane of the endosome and are delivered to lysosomes enabling degradation of membrane proteins. The polypeptide is Charged multivesicular body protein 6 (chmp6) (Dictyostelium discoideum (Social amoeba)).